The primary structure comprises 489 residues: Adenosylhomocysteinase (489 aa).

3 residues coordinate substrate: T68, D151, and E213. 214 to 216 (TTT) contributes to the NAD(+) binding site. The substrate site is built by K243 and D247. NAD(+) is bound by residues N248, 277–282 (GYGDVG), E300, N335, 356–358 (IGH), and N403.

Belongs to the adenosylhomocysteinase family. The cofactor is NAD(+).

The protein localises to the cytoplasm. The catalysed reaction is S-adenosyl-L-homocysteine + H2O = L-homocysteine + adenosine. It functions in the pathway amino-acid biosynthesis; L-homocysteine biosynthesis; L-homocysteine from S-adenosyl-L-homocysteine: step 1/1. In terms of biological role, may play a key role in the regulation of the intracellular concentration of adenosylhomocysteine. This is Adenosylhomocysteinase from Mycobacterium sp. (strain KMS).